Consider the following 201-residue polypeptide: MDNTLTLIKTVYEINQLEEIAAPQIILAGRSNVGKSSLINCLASRKKLAKISSTPGKTRSLNYYEVSPHGYYIVDLPGYGYARCSKTERAKWAKLIDKYLLDNAYVAAAAVLLDSRHNPQQNDLDLISYFKHCNIPIIPIMTKSDKTKQKDRSKVQKKWEDILKVKPICVSSKTGMNRTRLWNLLDVTAIPELAEIEEETE.

Residues 21-191 enclose the EngB-type G domain; it reads AAPQIILAGR…WNLLDVTAIP (171 aa). Residues 29-36, 56-60, 75-78, 142-145, and 168-172 each bind GTP; these read GRSNVGKS, GKTRS, DLPG, TKSD, and ICVSS. The Mg(2+) site is built by S36 and T58.

It belongs to the TRAFAC class TrmE-Era-EngA-EngB-Septin-like GTPase superfamily. EngB GTPase family. Mg(2+) serves as cofactor.

Its function is as follows. Necessary for normal cell division and for the maintenance of normal septation. The chain is Probable GTP-binding protein EngB from Maridesulfovibrio salexigens (strain ATCC 14822 / DSM 2638 / NCIMB 8403 / VKM B-1763) (Desulfovibrio salexigens).